The primary structure comprises 356 residues: Phenylalanine--tRNA ligase alpha subunit (356 aa).

Glu260 serves as a coordination point for Mg(2+).

It belongs to the class-II aminoacyl-tRNA synthetase family. Phe-tRNA synthetase alpha subunit type 1 subfamily. In terms of assembly, tetramer of two alpha and two beta subunits. It depends on Mg(2+) as a cofactor.

The protein resides in the cytoplasm. The enzyme catalyses tRNA(Phe) + L-phenylalanine + ATP = L-phenylalanyl-tRNA(Phe) + AMP + diphosphate + H(+). This chain is Phenylalanine--tRNA ligase alpha subunit, found in Gluconacetobacter diazotrophicus (strain ATCC 49037 / DSM 5601 / CCUG 37298 / CIP 103539 / LMG 7603 / PAl5).